A 140-amino-acid chain; its full sequence is MAGWNAYIDNLMADGTCQDAAIVGYKDSPSVWAAVPGKTFVNITPAEVGILVGKDRSSFFVNGLTLGGQKCSVIRDSLLQDGEFTMDLRTKSTGGAPTFNITVTMTAKTLVLLMGKEGVHGGMINKKCYEMASHLRRSQY.

An N-acetylalanine modification is found at A2. The residue at position 28 (S28) is a Phosphoserine. Residue K54 forms a Glycyl lysine isopeptide (Lys-Gly) (interchain with G-Cter in SUMO2); alternate linkage. K54 participates in a covalent cross-link: Glycyl lysine isopeptide (Lys-Gly) (interchain with G-Cter in ubiquitin); alternate. Residue S57 is modified to Phosphoserine. An N6-acetyllysine modification is found at K108. Residue Y129 is modified to Phosphotyrosine. A Phosphoserine; by ROCK1 modification is found at S138.

It belongs to the profilin family. As to quaternary structure, found in a complex with XPO6, Ran, ACTB and PFN1. Interacts with ACTB. Interacts with VASP. Interacts with HTT. Interacts with SH3BGRL. Occurs in many kinds of cells as a complex with monomeric actin in a 1:1 ratio. Interacts with ACTMAP. In terms of processing, phosphorylation at Ser-138 reduces its affinity for G-actin and blocks its interaction with HTT, reducing its ability to inhibit androgen receptor (AR) and HTT aggregation.

Its subcellular location is the cytoplasm. It is found in the cytoskeleton. Binds to actin and affects the structure of the cytoskeleton. At high concentrations, profilin prevents the polymerization of actin, whereas it enhances it at low concentrations. By binding to PIP2, it inhibits the formation of IP3 and DG. Inhibits androgen receptor (AR) and HTT aggregation and binding of G-actin is essential for its inhibition of AR. The chain is Profilin-1 (PFN1) from Bos taurus (Bovine).